The following is a 337-amino-acid chain: Vacuolar protein sorting-associated protein 26B (337 aa).

Residues Ser-311–Glu-337 form a disordered region.

Belongs to the VPS26 family. Component of the heterotrimeric retromer cargo-selective complex (CSC) which is believed to associate with variable sorting nexins to form functionally distinct retromer complex variants.

It is found in the cytoplasm. The protein resides in the membrane. The protein localises to the endosome. Its function is as follows. Acts as a component of the retromer cargo-selective complex (CSC). The CSC is believed to be the core functional component of retromer or respective retromer complex variants acting to prevent missorting of selected transmembrane cargo proteins into the lysosomal degradation pathway. Retromer mediates retrograde transport of cargo proteins from endosomes to the trans-Golgi network (TGN). The sequence is that of Vacuolar protein sorting-associated protein 26B (vps26b) from Xenopus tropicalis (Western clawed frog).